The primary structure comprises 597 residues: Elongation factor 4 (597 aa).

The 183-residue stretch at 2-184 (DHIRNFSIIA…ALVAKVPPPK (183 aa)) folds into the tr-type G domain. Residues 14–19 (DHGKST) and 131–134 (NKID) contribute to the GTP site.

The protein belongs to the TRAFAC class translation factor GTPase superfamily. Classic translation factor GTPase family. LepA subfamily.

The protein resides in the cell inner membrane. The enzyme catalyses GTP + H2O = GDP + phosphate + H(+). Functionally, required for accurate and efficient protein synthesis under certain stress conditions. May act as a fidelity factor of the translation reaction, by catalyzing a one-codon backward translocation of tRNAs on improperly translocated ribosomes. Back-translocation proceeds from a post-translocation (POST) complex to a pre-translocation (PRE) complex, thus giving elongation factor G a second chance to translocate the tRNAs correctly. Binds to ribosomes in a GTP-dependent manner. This chain is Elongation factor 4, found in Paraburkholderia xenovorans (strain LB400).